A 311-amino-acid chain; its full sequence is Ketoisovalerate oxidoreductase subunit VorB (311 aa).

As to quaternary structure, heterotetramer of one alpha, one beta, one delta and one gamma chain.

The enzyme catalyses 3-methyl-2-oxobutanoate + 2 oxidized [2Fe-2S]-[ferredoxin] + CoA = 2-methylpropanoyl-CoA + 2 reduced [2Fe-2S]-[ferredoxin] + CO2 + H(+). This is Ketoisovalerate oxidoreductase subunit VorB (vorB) from Pyrococcus abyssi (strain GE5 / Orsay).